Here is a 243-residue protein sequence, read N- to C-terminus: Uridylate kinase (243 aa).

Residue 15–18 (KLSG) participates in ATP binding. An involved in allosteric activation by GTP region spans residues 23-28 (GEEGFG). Glycine 57 is a UMP binding site. 2 residues coordinate ATP: glycine 58 and arginine 62. Residues aspartate 77 and 138–145 (TGNPFFTT) each bind UMP. Residues threonine 165, phenylalanine 171, and aspartate 174 each coordinate ATP.

The protein belongs to the UMP kinase family. As to quaternary structure, homohexamer.

It is found in the cytoplasm. The enzyme catalyses UMP + ATP = UDP + ADP. The protein operates within pyrimidine metabolism; CTP biosynthesis via de novo pathway; UDP from UMP (UMPK route): step 1/1. Allosterically activated by GTP. Inhibited by UTP. In terms of biological role, catalyzes the reversible phosphorylation of UMP to UDP. This chain is Uridylate kinase, found in Vibrio campbellii (strain ATCC BAA-1116).